Here is a 2381-residue protein sequence, read N- to C-terminus: Nipped-B-like protein A (2381 aa).

The HEAT 1 repeat unit spans residues 85–124; sequence SDELEGDVPVLLQLLMSRNPNIFRNKTAPNTPQYPAQAGI. 3 disordered regions span residues 131–211, 240–289, and 329–503; these read PPYK…HLQQ, HLLQ…DIVG, and LAAI…ELPP. Residues 138-158 show a composition bias toward polar residues; that stretch reads GSMQGSPASANYQQASMSHSP. Composition is skewed to basic and acidic residues over residues 254-273 and 333-355; these read GTKD…KSSE and ERME…DKDK. Gly residues predominate over residues 373–389; that stretch reads GTAGSGSGAPGGGGGAN. Over residues 451–473 the composition is skewed to basic and acidic residues; the sequence is VKHEHDHDPEHPHYDDKQPDTPR. A PxVxL motif motif is present at residues 552–565; sequence KKSVKPVVVLQKLS. Residues 570-580 are compositionally biased toward basic and acidic residues; the sequence is QRLMRERDSRA. Disordered stretches follow at residues 570–604 and 629–708; these read QRLM…SVLK and RKRS…NEVA. Residues 581–592 show a composition bias toward polar residues; the sequence is SKSGKNRLSSGR. Basic and acidic residues-rich tracts occupy residues 633–642 and 658–694; these read TVNERPKYAE and KDRD…RYDD. 4 HEAT repeats span residues 1299 to 1337, 1375 to 1413, 1477 to 1516, and 1843 to 1881; these read SQSF…VDPS, PQLT…EQPN, YDWF…HILK, and LIHP…KYTG. Disordered stretches follow at residues 2005 to 2095 and 2228 to 2271; these read IPGR…DLDD and LLGG…GDSA. Basic residues predominate over residues 2006 to 2021; it reads PGRKSRKRRRRRRRPQ. Residues 2040–2056 are compositionally biased toward basic and acidic residues; the sequence is EEERGAQDEERERHSGD. Over residues 2057–2068 the composition is skewed to acidic residues; sequence EEYDDDDYEEDE. Positions 2077-2086 are enriched in basic and acidic residues; the sequence is KPTEDIRQSE.

The protein belongs to the SCC2/Nipped-B family.

The protein resides in the nucleus. May play a structural role in chromatin. Involved in sister chromatid cohesion, possibly by facilitating the cohesin complex loading. Transcription factor, which may promote cortical neuron migration during brain development by regulating the transcription of crucial genes in this process. This is Nipped-B-like protein A (nipbla) from Danio rerio (Zebrafish).